The chain runs to 174 residues: Crossover junction endodeoxyribonuclease RuvC (174 aa).

Active-site residues include aspartate 8, glutamate 68, and aspartate 140. Residues aspartate 8, glutamate 68, and aspartate 140 each coordinate Mg(2+).

The protein belongs to the RuvC family. Homodimer which binds Holliday junction (HJ) DNA. The HJ becomes 2-fold symmetrical on binding to RuvC with unstacked arms; it has a different conformation from HJ DNA in complex with RuvA. In the full resolvosome a probable DNA-RuvA(4)-RuvB(12)-RuvC(2) complex forms which resolves the HJ. The cofactor is Mg(2+).

The protein resides in the cytoplasm. The enzyme catalyses Endonucleolytic cleavage at a junction such as a reciprocal single-stranded crossover between two homologous DNA duplexes (Holliday junction).. The RuvA-RuvB-RuvC complex processes Holliday junction (HJ) DNA during genetic recombination and DNA repair. Endonuclease that resolves HJ intermediates. Cleaves cruciform DNA by making single-stranded nicks across the HJ at symmetrical positions within the homologous arms, yielding a 5'-phosphate and a 3'-hydroxyl group; requires a central core of homology in the junction. The consensus cleavage sequence is 5'-(A/T)TT(C/G)-3'. Cleavage occurs on the 3'-side of the TT dinucleotide at the point of strand exchange. HJ branch migration catalyzed by RuvA-RuvB allows RuvC to scan DNA until it finds its consensus sequence, where it cleaves and resolves the cruciform DNA. The polypeptide is Crossover junction endodeoxyribonuclease RuvC (Legionella pneumophila subsp. pneumophila (strain Philadelphia 1 / ATCC 33152 / DSM 7513)).